The primary structure comprises 220 residues: Sugar transporter SWEET1 (220 aa).

7 helical membrane-spanning segments follow: residues 9–29, 44–64, 70–90, 106–126, 138–158, 167–187, and 191–211; these read LMTF…IMPL, VAGL…SYAL, TMLF…FNYW, VMIA…NTVD, LSSV…AIVI, IINV…FGLL, and IYIY…LTLI. In terms of domain architecture, MtN3/slv 1 spans 12–92; sequence FIQFCATFIT…IYYVFNYWKN (81 aa). One can recognise a MtN3/slv 2 domain in the interval 134 to 217; that stretch reads RLGFLSSVVC…LTLIKLYPPQ (84 aa).

Belongs to the SWEET sugar transporter family.

It localises to the golgi apparatus membrane. The protein resides in the cell membrane. Its function is as follows. Mediates both low-affinity uptake and efflux of sugar across the membrane. This chain is Sugar transporter SWEET1 (slc50a1), found in Dictyostelium discoideum (Social amoeba).